The chain runs to 171 residues: Small ribosomal subunit protein mS25 (171 aa).

Belongs to the mitochondrion-specific ribosomal protein mS25 family. Component of the mitochondrial ribosome small subunit (28S) which comprises a 12S rRNA and about 30 distinct proteins.

It is found in the mitochondrion. The polypeptide is Small ribosomal subunit protein mS25 (Mrps25) (Rattus norvegicus (Rat)).